Consider the following 180-residue polypeptide: tRNA (cytidine(56)-2'-O)-methyltransferase (180 aa).

An S-adenosyl-L-methionine-binding site is contributed by leucine 85.

The protein belongs to the aTrm56 family. Homodimer.

Its subcellular location is the cytoplasm. The catalysed reaction is cytidine(56) in tRNA + S-adenosyl-L-methionine = 2'-O-methylcytidine(56) in tRNA + S-adenosyl-L-homocysteine + H(+). Its function is as follows. Specifically catalyzes the AdoMet-dependent 2'-O-ribose methylation of cytidine at position 56 in tRNAs. The chain is tRNA (cytidine(56)-2'-O)-methyltransferase from Methanobrevibacter smithii (strain ATCC 35061 / DSM 861 / OCM 144 / PS).